We begin with the raw amino-acid sequence, 786 residues long: Endonuclease MutS2 (786 aa).

334-341 (GPNTGGKT) is a binding site for ATP. One can recognise a Smr domain in the interval 711–786 (LDLRGERYEN…GNGATVVYFK (76 aa)).

Belongs to the DNA mismatch repair MutS family. MutS2 subfamily. In terms of assembly, homodimer. Binds to stalled ribosomes, contacting rRNA.

Its function is as follows. Endonuclease that is involved in the suppression of homologous recombination and thus may have a key role in the control of bacterial genetic diversity. In terms of biological role, acts as a ribosome collision sensor, splitting the ribosome into its 2 subunits. Detects stalled/collided 70S ribosomes which it binds and splits by an ATP-hydrolysis driven conformational change. Acts upstream of the ribosome quality control system (RQC), a ribosome-associated complex that mediates the extraction of incompletely synthesized nascent chains from stalled ribosomes and their subsequent degradation. Probably generates substrates for RQC. This Ligilactobacillus salivarius (strain UCC118) (Lactobacillus salivarius) protein is Endonuclease MutS2.